The chain runs to 123 residues: Large ribosomal subunit protein uL14 (123 aa).

The protein belongs to the universal ribosomal protein uL14 family. In terms of assembly, part of the 50S ribosomal subunit. Forms a cluster with proteins L3 and L19. In the 70S ribosome, L14 and L19 interact and together make contacts with the 16S rRNA in bridges B5 and B8.

Functionally, binds to 23S rRNA. Forms part of two intersubunit bridges in the 70S ribosome. The sequence is that of Large ribosomal subunit protein uL14 from Actinobacillus pleuropneumoniae serotype 7 (strain AP76).